Consider the following 706-residue polypeptide: Fatty acid oxidation complex subunit alpha (706 aa).

The segment at 1-188 is enoyl-CoA hydratase; that stretch reads MEKTFNLTRR…KMGLVNDVVP (188 aa). Residues 308-706 form a 3-hydroxyacyl-CoA dehydrogenase region; the sequence is RKVKKAVILG…TMARENVSFF (399 aa).

It in the N-terminal section; belongs to the enoyl-CoA hydratase/isomerase family. In the central section; belongs to the 3-hydroxyacyl-CoA dehydrogenase family. Heterotetramer of two alpha chains (FadJ) and two beta chains (FadI).

The protein localises to the cytoplasm. It carries out the reaction a (3S)-3-hydroxyacyl-CoA = a (2E)-enoyl-CoA + H2O. The catalysed reaction is a 4-saturated-(3S)-3-hydroxyacyl-CoA = a (3E)-enoyl-CoA + H2O. The enzyme catalyses a (3S)-3-hydroxyacyl-CoA + NAD(+) = a 3-oxoacyl-CoA + NADH + H(+). It catalyses the reaction (3S)-3-hydroxybutanoyl-CoA = (3R)-3-hydroxybutanoyl-CoA. Its pathway is lipid metabolism; fatty acid beta-oxidation. Functionally, catalyzes the formation of a hydroxyacyl-CoA by addition of water on enoyl-CoA. Also exhibits 3-hydroxyacyl-CoA epimerase and 3-hydroxyacyl-CoA dehydrogenase activities. The sequence is that of Fatty acid oxidation complex subunit alpha from Shewanella putrefaciens (strain CN-32 / ATCC BAA-453).